The primary structure comprises 194 residues: Imidazoleglycerol-phosphate dehydratase (194 aa).

Belongs to the imidazoleglycerol-phosphate dehydratase family.

It localises to the cytoplasm. The catalysed reaction is D-erythro-1-(imidazol-4-yl)glycerol 3-phosphate = 3-(imidazol-4-yl)-2-oxopropyl phosphate + H2O. The protein operates within amino-acid biosynthesis; L-histidine biosynthesis; L-histidine from 5-phospho-alpha-D-ribose 1-diphosphate: step 6/9. In Halalkalibacterium halodurans (strain ATCC BAA-125 / DSM 18197 / FERM 7344 / JCM 9153 / C-125) (Bacillus halodurans), this protein is Imidazoleglycerol-phosphate dehydratase.